A 382-amino-acid chain; its full sequence is ATP phosphoribosyltransferase regulatory subunit (382 aa).

This sequence belongs to the class-II aminoacyl-tRNA synthetase family. HisZ subfamily. As to quaternary structure, heteromultimer composed of HisG and HisZ subunits.

It localises to the cytoplasm. It participates in amino-acid biosynthesis; L-histidine biosynthesis; L-histidine from 5-phospho-alpha-D-ribose 1-diphosphate: step 1/9. Its function is as follows. Required for the first step of histidine biosynthesis. May allow the feedback regulation of ATP phosphoribosyltransferase activity by histidine. The chain is ATP phosphoribosyltransferase regulatory subunit from Burkholderia pseudomallei (strain 1106a).